The sequence spans 192 residues: Inosine triphosphate pyrophosphatase (192 aa).

Thr11–Lys16 contacts ITP. Glu41 contributes to the Mg(2+) binding site. Residues Lys53, Asp69–Thr70, Lys86, Phe146–Asp149, Lys169, and His174–Arg175 each bind ITP.

The protein belongs to the HAM1 NTPase family. Homodimer. The cofactor is Mg(2+). Mn(2+) serves as cofactor.

It localises to the cytoplasm. It catalyses the reaction ITP + H2O = IMP + diphosphate + H(+). The catalysed reaction is dITP + H2O = dIMP + diphosphate + H(+). The enzyme catalyses XTP + H2O = XMP + diphosphate + H(+). In terms of biological role, pyrophosphatase that hydrolyzes non-canonical purine nucleotides such as inosine triphosphate (ITP), deoxyinosine triphosphate (dITP) or xanthosine 5'-triphosphate (XTP) to their respective monophosphate derivatives. The enzyme does not distinguish between the deoxy- and ribose forms. Probably excludes non-canonical purines from RNA and DNA precursor pools, thus preventing their incorporation into RNA and DNA and avoiding chromosomal lesions. In Ciona intestinalis (Transparent sea squirt), this protein is Inosine triphosphate pyrophosphatase.